Consider the following 200-residue polypeptide: MTEELKNKKINKKYYSQNRNKTKAEFQKADIKKNQYLNLKTKLNNVLLEVQNLKELNETLKKELKSEKQLNLAEISNLTKKYNQKELETKKYGASNLAKDLIQPLEILKKVVNAPNNNEVVQAYVKGFEMIINQINNVLESHHIKAMNVKVGDMFDPHLHDANEAVETDEYKTNQIVGVLSDGYMIHDKVLVYAIVKVAK.

The protein belongs to the GrpE family. Homodimer.

The protein localises to the cytoplasm. Participates actively in the response to hyperosmotic and heat shock by preventing the aggregation of stress-denatured proteins, in association with DnaK and GrpE. It is the nucleotide exchange factor for DnaK and may function as a thermosensor. Unfolded proteins bind initially to DnaJ; upon interaction with the DnaJ-bound protein, DnaK hydrolyzes its bound ATP, resulting in the formation of a stable complex. GrpE releases ADP from DnaK; ATP binding to DnaK triggers the release of the substrate protein, thus completing the reaction cycle. Several rounds of ATP-dependent interactions between DnaJ, DnaK and GrpE are required for fully efficient folding. This Mycoplasma mycoides subsp. mycoides SC (strain CCUG 32753 / NCTC 10114 / PG1) protein is Protein GrpE.